A 180-amino-acid polypeptide reads, in one-letter code: Molybdopterin synthase catalytic subunit (180 aa).

Over residues 1–10 (MSSTTPTTEP) the composition is skewed to polar residues. A disordered region spans residues 1–31 (MSSTTPTTEPDQLPPHLDPQTYPRTTTNPTL). Low complexity predominate over residues 21–31 (TYPRTTTNPTL). Residues 131–132 (HR), lysine 147, and 154–156 (KKE) contribute to the substrate site.

The protein belongs to the MoaE family. MOCS2B subfamily. In terms of assembly, heterotetramer; composed of 2 small (MOCS2A) and 2 large (MOCS2B) subunits.

The protein resides in the cytoplasm. It carries out the reaction 2 [molybdopterin-synthase sulfur-carrier protein]-C-terminal-Gly-aminoethanethioate + cyclic pyranopterin phosphate + H2O = molybdopterin + 2 [molybdopterin-synthase sulfur-carrier protein]-C-terminal Gly-Gly + 2 H(+). It functions in the pathway cofactor biosynthesis; molybdopterin biosynthesis. In terms of biological role, catalytic subunit of the molybdopterin synthase complex, a complex that catalyzes the conversion of precursor Z into molybdopterin. Acts by mediating the incorporation of 2 sulfur atoms from thiocarboxylated MOCS2A into precursor Z to generate a dithiolene group. This is Molybdopterin synthase catalytic subunit from Aspergillus niger (strain ATCC MYA-4892 / CBS 513.88 / FGSC A1513).